Consider the following 492-residue polypeptide: Ketol-acid reductoisomerase (NADP(+)) (492 aa).

Residues 14–208 (LDQLGKCRFM…GGHRAGVLQS (195 aa)) enclose the KARI N-terminal Rossmann domain. NADP(+) contacts are provided by residues 45–48 (CGAQ), arginine 68, arginine 76, serine 78, and 108–110 (DKQ). Histidine 132 is an active-site residue. Residue glycine 158 participates in NADP(+) binding. KARI C-terminal knotted domains lie at 209–344 (SFVA…NAPQ) and 345–485 (FDGK…MKDM). Aspartate 217, glutamate 221, glutamate 389, and glutamate 393 together coordinate Mg(2+). Serine 414 provides a ligand contact to substrate.

The protein belongs to the ketol-acid reductoisomerase family. Mg(2+) serves as cofactor.

The enzyme catalyses (2R)-2,3-dihydroxy-3-methylbutanoate + NADP(+) = (2S)-2-acetolactate + NADPH + H(+). It catalyses the reaction (2R,3R)-2,3-dihydroxy-3-methylpentanoate + NADP(+) = (S)-2-ethyl-2-hydroxy-3-oxobutanoate + NADPH + H(+). It functions in the pathway amino-acid biosynthesis; L-isoleucine biosynthesis; L-isoleucine from 2-oxobutanoate: step 2/4. Its pathway is amino-acid biosynthesis; L-valine biosynthesis; L-valine from pyruvate: step 2/4. Its function is as follows. Involved in the biosynthesis of branched-chain amino acids (BCAA). Catalyzes an alkyl-migration followed by a ketol-acid reduction of (S)-2-acetolactate (S2AL) to yield (R)-2,3-dihydroxy-isovalerate. In the isomerase reaction, S2AL is rearranged via a Mg-dependent methyl migration to produce 3-hydroxy-3-methyl-2-ketobutyrate (HMKB). In the reductase reaction, this 2-ketoacid undergoes a metal-dependent reduction by NADPH to yield (R)-2,3-dihydroxy-isovalerate. The protein is Ketol-acid reductoisomerase (NADP(+)) of Pectobacterium carotovorum subsp. carotovorum (strain PC1).